Reading from the N-terminus, the 138-residue chain is Ribonuclease VapC21 (138 aa).

Residues 6–128 (LLDKSAAYRA…ERIAAITRQP (123 aa)) form the PINc domain. Mg(2+)-binding residues include D8 and D97.

This sequence belongs to the PINc/VapC protein family. The cofactor is Mg(2+).

Toxic component of a type II toxin-antitoxin (TA) system. An RNase. Its toxic effect is neutralized by coexpression with cognate antitoxin VapB21. The sequence is that of Ribonuclease VapC21 from Mycobacterium tuberculosis (strain CDC 1551 / Oshkosh).